A 440-amino-acid polypeptide reads, in one-letter code: Enolase (440 aa).

An igE-binding determinant region spans residues 120–189 (KAAAAEKRVP…TEAMRQGAEV (70 aa)). Substrate-binding residues include His159 and Glu168. Glu211 acts as the Proton donor in catalysis. Positions 246, 297, and 324 each coordinate Mg(2+). Positions 297 and 324 each coordinate substrate. Lys349 functions as the Proton acceptor in the catalytic mechanism. Residues 376–379 (SHRS) and Lys400 contribute to the substrate site.

The protein belongs to the enolase family. As to quaternary structure, homodimer. The cofactor is Mg(2+).

The protein localises to the cytoplasm. It catalyses the reaction (2R)-2-phosphoglycerate = phosphoenolpyruvate + H2O. Its pathway is carbohydrate degradation; glycolysis; pyruvate from D-glyceraldehyde 3-phosphate: step 4/5. This chain is Enolase (ENO), found in Davidiella tassiana (Mycosphaerella tassiana).